The sequence spans 163 residues: Putative pre-16S rRNA nuclease (163 aa).

Belongs to the YqgF nuclease family.

The protein resides in the cytoplasm. Functionally, could be a nuclease involved in processing of the 5'-end of pre-16S rRNA. The polypeptide is Putative pre-16S rRNA nuclease (Rhizobium leguminosarum bv. trifolii (strain WSM2304)).